Here is a 188-residue protein sequence, read N- to C-terminus: Elongation factor P (188 aa).

It belongs to the elongation factor P family.

The protein localises to the cytoplasm. Its pathway is protein biosynthesis; polypeptide chain elongation. In terms of biological role, involved in peptide bond synthesis. Stimulates efficient translation and peptide-bond synthesis on native or reconstituted 70S ribosomes in vitro. Probably functions indirectly by altering the affinity of the ribosome for aminoacyl-tRNA, thus increasing their reactivity as acceptors for peptidyl transferase. In Ureaplasma parvum serovar 3 (strain ATCC 700970), this protein is Elongation factor P (efp).